Consider the following 414-residue polypeptide: Serine hydroxymethyltransferase (414 aa).

(6S)-5,6,7,8-tetrahydrofolate contacts are provided by residues Leu-121 and 125-127 (GHL). At Lys-229 the chain carries N6-(pyridoxal phosphate)lysine.

Belongs to the SHMT family. Homodimer. The cofactor is pyridoxal 5'-phosphate.

It localises to the cytoplasm. It catalyses the reaction (6R)-5,10-methylene-5,6,7,8-tetrahydrofolate + glycine + H2O = (6S)-5,6,7,8-tetrahydrofolate + L-serine. It participates in one-carbon metabolism; tetrahydrofolate interconversion. The protein operates within amino-acid biosynthesis; glycine biosynthesis; glycine from L-serine: step 1/1. Its function is as follows. Catalyzes the reversible interconversion of serine and glycine with tetrahydrofolate (THF) serving as the one-carbon carrier. This reaction serves as the major source of one-carbon groups required for the biosynthesis of purines, thymidylate, methionine, and other important biomolecules. Also exhibits THF-independent aldolase activity toward beta-hydroxyamino acids, producing glycine and aldehydes, via a retro-aldol mechanism. This Polaromonas naphthalenivorans (strain CJ2) protein is Serine hydroxymethyltransferase.